Reading from the N-terminus, the 443-residue chain is 3-isopropylmalate dehydratase large subunit (443 aa).

Positions 347, 407, and 410 each coordinate [4Fe-4S] cluster.

The protein belongs to the aconitase/IPM isomerase family. LeuC type 1 subfamily. Heterodimer of LeuC and LeuD. It depends on [4Fe-4S] cluster as a cofactor.

It carries out the reaction (2R,3S)-3-isopropylmalate = (2S)-2-isopropylmalate. The protein operates within amino-acid biosynthesis; L-leucine biosynthesis; L-leucine from 3-methyl-2-oxobutanoate: step 2/4. In terms of biological role, catalyzes the isomerization between 2-isopropylmalate and 3-isopropylmalate, via the formation of 2-isopropylmaleate. The polypeptide is 3-isopropylmalate dehydratase large subunit (Buchnera aphidicola subsp. Uroleucon aeneum).